Here is a 552-residue protein sequence, read N- to C-terminus: MEKVQQTIRAPRGTELQTKGWVQEAALRMLMNNLDPEVAEKPEELVVYGGIGRAARNWESYQAIVDSLKTLESDETLLVQSGKPVAIFKSHEDAPRVLLANSNLVPKWANWDHFRELEKKGLMMYGQMTAGSWIYIGTQGILQGTYETFGEAARQHFGGSLKGTLTLTAGLGGMGGAQPLAVTMNGGVVIAIDVDKRSIDRRIEKRYCDMYTESLEEALAVANEYKEKKEPISIGLLGNAAEILPELVKRNITPDLVTDQTSAHDPLNGYIPVGYTLEEAAKLREEDPERYVQLSKESMTKHVEAMLAMQEKGAITFDYGNNIRQVAFDEGLKNAFDFPGFVPAFIRPLFCEGKGPFRWVALSGDPEDIYKTDEVILREFADNEHLCNWIRMARQQVEFQGLPSRICWLGYGERAKFGRIINEMVANGELSAPIVIGRDHLDCGSVASPNRETEAMKDGSDAVADWPILNALINSVNGASWVSVHHGGGVGMGYSLHAGMVIVADGTEAAAKRIERVLTSDPGMGVVRHVDAGYDLAVETAKEKGVNIPMMK.

Residues 49–50 (GG), glutamine 127, 173–175 (GMG), aspartate 193, 239–240 (NA), 260–264 (QTSAH), 270–271 (YI), and tyrosine 319 contribute to the NAD(+) site. The active site involves cysteine 407. Glycine 489 provides a ligand contact to NAD(+).

Belongs to the urocanase family. It depends on NAD(+) as a cofactor.

It localises to the cytoplasm. The enzyme catalyses 4-imidazolone-5-propanoate = trans-urocanate + H2O. Its pathway is amino-acid degradation; L-histidine degradation into L-glutamate; N-formimidoyl-L-glutamate from L-histidine: step 2/3. Its function is as follows. Catalyzes the conversion of urocanate to 4-imidazolone-5-propionate. The protein is Urocanate hydratase of Bacillus thuringiensis (strain Al Hakam).